The sequence spans 610 residues: Protein Smaug homolog 1 (610 aa).

Phosphoserine is present on S67. Disordered stretches follow at residues 177–222 (ARGP…EEGS), 318–366 (SSPS…LQPP), and 464–487 (NRGF…GRRN). In terms of domain architecture, SAM spans 222 to 295 (SGMKDVPAWL…LKSLERDIIE (74 aa)). S319 is subject to Phosphoserine. Phosphothreonine is present on T323. Positions 344 to 358 (SAATVTSATASASAG) are enriched in low complexity. R465 bears the Omega-N-methylarginine mark. Polar residues predominate over residues 467–480 (FGQSNSLPTASSVG). Phosphoserine is present on S472.

It belongs to the SMAUG family. As to expression, expressed in brain (at protein level).

The protein resides in the cytoplasm. Its subcellular location is the cell projection. It localises to the dendrite. It is found in the synapse. The protein localises to the synaptosome. Functionally, acts as a translational repressor of SRE-containing messengers. This is Protein Smaug homolog 1 (Samd4a) from Rattus norvegicus (Rat).